Consider the following 526-residue polypeptide: Glutamyl-tRNA(Gln) amidotransferase subunit A, mitochondrial (526 aa).

The active-site Charge relay system is the Lys-76. The tract at residues 147 to 166 is disordered; that stretch reads QYREKRKQNSHSENEDSNWL. Ser-171 serves as the catalytic Charge relay system. Ser-195 functions as the Acyl-ester intermediate in the catalytic mechanism.

This sequence belongs to the amidase family. GatA subfamily. As to quaternary structure, subunit of the heterotrimeric GatCAB amidotransferase (AdT) complex, composed of A (QRSL1), B (GATB) and C (GATC) subunits.

Its subcellular location is the mitochondrion. It catalyses the reaction L-glutamyl-tRNA(Gln) + L-glutamine + ATP + H2O = L-glutaminyl-tRNA(Gln) + L-glutamate + ADP + phosphate + H(+). In terms of biological role, allows the formation of correctly charged Gln-tRNA(Gln) through the transamidation of misacylated Glu-tRNA(Gln) in the mitochondria. The reaction takes place in the presence of glutamine and ATP through an activated gamma-phospho-Glu-tRNA(Gln). The sequence is that of Glutamyl-tRNA(Gln) amidotransferase subunit A, mitochondrial from Bos taurus (Bovine).